The primary structure comprises 501 residues: Lysine--tRNA ligase (501 aa).

Mg(2+) is bound by residues Glu-411 and Glu-418.

This sequence belongs to the class-II aminoacyl-tRNA synthetase family. Homodimer. It depends on Mg(2+) as a cofactor.

The protein resides in the cytoplasm. The catalysed reaction is tRNA(Lys) + L-lysine + ATP = L-lysyl-tRNA(Lys) + AMP + diphosphate. This is Lysine--tRNA ligase from Aliivibrio salmonicida (strain LFI1238) (Vibrio salmonicida (strain LFI1238)).